An 81-amino-acid chain; its full sequence is Saposin-C (81 aa).

One can recognise a Saposin B-type domain in the interval E1 to G81. Intrachain disulfides connect C5–C78, C8–C72, and C36–C47. N22 carries N-linked (GlcNAc...) asparagine glycosylation.

In terms of biological role, saposin-A and saposin-C stimulate the hydrolysis of glucosylceramide by beta-glucosylceramidase (EC 3.2.1.45) and galactosylceramide by beta-galactosylceramidase (EC 3.2.1.46). Saposin-C apparently acts by combining with the enzyme and acidic lipid to form an activated complex, rather than by solubilizing the substrate. This is Saposin-C (PSAP) from Cavia porcellus (Guinea pig).